Consider the following 474-residue polypeptide: MFS transporter SAT21 (474 aa).

A run of 6 helical transmembrane segments spans residues 7-27 (LVLP…LEVP), 64-84 (LVVG…ILYF), 101-121 (CVGY…HQVF), 131-151 (LFLF…AFVA), 162-182 (FLFL…ALAT), and 189-209 (LFLP…LLQM). Residues 220–252 (KVVGSTSDQTEPFLRSSSNSSQESGTAAPAIDP) are disordered. A compositionally biased stretch (polar residues) spans 222 to 244 (VGSTSDQTEPFLRSSSNSSQESG). Asn-238 carries N-linked (GlcNAc...) asparagine glycosylation. 6 consecutive transmembrane segments (helical) span residues 276 to 296 (FICY…AFIF), 315 to 335 (LALS…ANAT), 346 to 366 (INIG…IMAW), 374 to 394 (FIFS…LQGV), 406 to 426 (SIFA…GPLM), and 445 to 465 (FLAS…LWAL).

This sequence belongs to the major facilitator superfamily.

It localises to the cell membrane. Functionally, MFS transporter; part of the satratoxin SC3 cluster involved in the biosynthesis of satratoxins, trichothecene mycotoxins that are associated with human food poisonings. Satratoxins are suggested to be made by products of multiple gene clusters (SC1, SC2 and SC3) that encode 21 proteins in all, including polyketide synthases, acetyltransferases, and other enzymes expected to modify the trichothecene skeleton. SC1 encodes 10 proteins, SAT1 to SAT10. The largest are SAT8, which encodes a putative polyketide synthase (PKS) with a conventional non-reducing architecture, and SAT10, a putative protein containing four ankyrin repeats and thus may be involved in protein scaffolding. The putative short-chain reductase SAT3 may assist the PKS in some capacity. SAT6 contains a secretory lipase domain and acts probably as a trichothecene esterase. SAT5 encodes a putative acetyltransferase, and so, with SAT6, may affect endogenous protection from toxicity. The probable transcription factor SAT9 may regulate the expression of the SC1 cluster. SC2 encodes proteins SAT11 to SAT16, the largest of which encodes the putative reducing PKS SAT13. SAT11 is a cytochrome P450 monooxygenase, while SAT14 and SAT16 are probable acetyltransferases. The SC2 cluster may be regulated by the transcription factor SAT15. SC3 is a small cluster that encodes 5 proteins, SAT17 to SAT21. SAT21 is a putative MFS-type transporter which may have a role in exporting secondary metabolites. The four other proteins putatively encoded in SC3 include the taurine hydroxylase-like protein SAT17, the O-methyltransferase SAT18, the acetyltransferase SAT19, and the Cys6-type zinc finger SAT20, the latter being probably involved in regulation of SC3 expression. The protein is MFS transporter SAT21 of Stachybotrys chartarum (strain CBS 109288 / IBT 7711) (Toxic black mold).